Here is a 493-residue protein sequence, read N- to C-terminus: Transcript termination protein A18 (493 aa).

A Helicase ATP-binding domain is found at 100–256; sequence MIELKRPLYI…NSIINIAKLS (157 aa). 113–120 serves as a coordination point for ATP; that stretch reads LACGFGKT. Positions 206–209 match the DESH box motif; sequence DESH.

This sequence belongs to the helicase family. Poxviruses subfamily. As to quaternary structure, interacts with G2. Might be part of a transcription complex composed at least of G2, A18, and H5.

It is found in the virion. In terms of biological role, DNA helicase which seems to act as a postreplicative transcription termination factor. Involved in ATP-dependent release of nascent RNA. Forms a stable complex with single-stranded DNA, and to a lesser extent RNA. This Camelus protein is Transcript termination protein A18.